The chain runs to 752 residues: Protein SEY1 homolog 1 (752 aa).

Residues Met-1 to Asn-674 are Cytoplasmic-facing. Positions Gly-40–Met-265 constitute a GB1/RHD3-type G domain. GTP is bound at residue Gly-50–Ser-57. A coiled-coil region spans residues Asn-445–Ile-465. A helical membrane pass occupies residues Ile-675 to Met-695. Residues Gly-696–Pro-698 lie on the Lumenal side of the membrane. Residues Leu-699–Leu-719 traverse the membrane as a helical segment. Topologically, residues His-720–Ser-752 are cytoplasmic.

It belongs to the TRAFAC class dynamin-like GTPase superfamily. GB1/RHD3 GTPase family. RHD3 subfamily.

Its subcellular location is the endoplasmic reticulum membrane. Its function is as follows. Probable GTP-binding protein that may be involved in cell development. This is Protein SEY1 homolog 1 from Paramecium tetraurelia.